The following is a 164-amino-acid chain: SsrA-binding protein (164 aa).

The segment at 141–164 (KLHDKRQDEKQKSIKKEINSALKR) is disordered. Over residues 145-158 (KRQDEKQKSIKKEI) the composition is skewed to basic and acidic residues.

It belongs to the SmpB family.

The protein localises to the cytoplasm. Required for rescue of stalled ribosomes mediated by trans-translation. Binds to transfer-messenger RNA (tmRNA), required for stable association of tmRNA with ribosomes. tmRNA and SmpB together mimic tRNA shape, replacing the anticodon stem-loop with SmpB. tmRNA is encoded by the ssrA gene; the 2 termini fold to resemble tRNA(Ala) and it encodes a 'tag peptide', a short internal open reading frame. During trans-translation Ala-aminoacylated tmRNA acts like a tRNA, entering the A-site of stalled ribosomes, displacing the stalled mRNA. The ribosome then switches to translate the ORF on the tmRNA; the nascent peptide is terminated with the 'tag peptide' encoded by the tmRNA and targeted for degradation. The ribosome is freed to recommence translation, which seems to be the essential function of trans-translation. This is SsrA-binding protein from Prochlorococcus marinus (strain MIT 9301).